Consider the following 510-residue polypeptide: Rab proteins geranylgeranyltransferase component A 1 (510 aa).

Belongs to the Rab GDI family. As to quaternary structure, may interact with rab-5, rab-7 and rab-11. Does not interact with rab-3, rab-27 and rab-10. Expressed in several neurons including head neurons, motor neurons located in the ventral nerve cord, HSN and CAN neurons, and tail neurons, and in muscles such as body-wall, pharyngeal, intestinal and anal sphincter. Also expressed in seam cells, the hypodermis and the intestine.

It is found in the cytoplasm. In terms of biological role, substrate-binding subunit of the Rab geranylgeranyltransferase (GGTase) complex. Binds unprenylated Rab proteins and presents the substrate peptide to the catalytic component B and remains bound to it after the geranylgeranyl transfer reaction. The component A is thought to be regenerated by transferring its prenylated Rab back to the donor membrane. Plays a role in neurotransmitter release from presynaptic terminals at neuromuscular junctions. Positively regulates the function of rab-27 in synaptic transmission most likely through mediating rab-27 prenylation. In Caenorhabditis elegans, this protein is Rab proteins geranylgeranyltransferase component A 1.